The chain runs to 305 residues: MENSQLCKLFIGGLNVQTSESGLRGHFEAFGTLTDCVVVVNPQTKRSRCFGFVTYSNVEEADAAMAASPHAVDGNTVELKRAVSREDSARPGAHAKVKKLFVGGLKGDVAEGDLIEHFSQFGTVEKAEIIADKQSGKKRGFGFVYFQNHDAADKAAVVKFHPIQGHRVEVKKAVPKEDIYSGGGGGGSRSSRGGRGGRGRGGGRDQNGLSKGGGGGYNSYGGYGGGGGGGYNAYGGGGGGSSYGGSDYGNGFGGFGSYSQHQSSYGPMKSGGGGGGGGSSWGGRSNSGPYRGGYGGGGGYGGSSF.

N-acetylmethionine is present on methionine 1. The 80-residue stretch at 7-86 folds into the RRM 1 domain; it reads CKLFIGGLNV…VELKRAVSRE (80 aa). The residue at position 68 (serine 68) is a Phosphoserine. Lysine 80 is covalently cross-linked (Glycyl lysine isopeptide (Lys-Gly) (interchain with G-Cter in SUMO2)). Position 84 is a phosphoserine; by MAPKAPK2 (serine 84). Residues lysine 96, lysine 98, lysine 99, and lysine 106 each participate in a glycyl lysine isopeptide (Lys-Gly) (interchain with G-Cter in SUMO2) cross-link. Residues 98–175 form the RRM 2 domain; that stretch reads KKLFVGGLKG…HRVEVKKAVP (78 aa). Lysine 133 is subject to N6-acetyllysine. Residue arginine 139 is modified to Omega-N-methylarginine. Glycyl lysine isopeptide (Lys-Gly) (interchain with G-Cter in SUMO2) cross-links involve residues lysine 154, lysine 159, lysine 172, and lysine 176. 2 disordered regions span residues 174–214 and 262–305; these read VPKE…KGGG and QSSY…GSSF. Gly residues-rich tracts occupy residues 181 to 200 and 269 to 281; these read SGGGGGGSRSSRGGRGGRGR and KSGGGGGGGGSSW. Serine 188 carries the post-translational modification Phosphoserine. The residue at position 284 (arginine 284) is an Omega-N-methylarginine. Residues 290 to 305 show a composition bias toward gly residues; sequence YRGGYGGGGGYGGSSF. Asymmetric dimethylarginine; alternate is present on arginine 291. Position 291 is a dimethylated arginine; alternate (arginine 291). Arginine 291 bears the Omega-N-methylarginine; alternate mark.

Post-translationally, phosphorylated at Ser-84 by MAPKAPK2 in response to LPS treatment, promoting stabilization of GADD45A mRNA. Arg-291 is dimethylated, probably to asymmetric dimethylarginine.

It localises to the nucleus. MRNA-binding component of ribonucleosomes. Specifically binds AU-rich element (ARE)-containing mRNAs. Involved in post-transcriptional regulation of cytokines mRNAs. The protein is Heterogeneous nuclear ribonucleoprotein A0 (HNRNPA0) of Homo sapiens (Human).